The primary structure comprises 1107 residues: Dynein axonemal assembly factor 1 homolog (1107 aa).

LRR repeat units lie at residues H34 to V56, G57 to T78, E79 to K100, Q101 to I122, V125 to R146, and F150 to G171. Positions N184 to W223 constitute an LRRCT domain. Disordered regions lie at residues H258 to K281, N428 to V487, E500 to E608, K780 to Q810, S834 to D855, and A1070 to D1107. Polar residues predominate over residues N428 to F437. Residues E446–I459 are compositionally biased toward acidic residues. A compositionally biased stretch (basic and acidic residues) spans E500–S512. A compositionally biased stretch (acidic residues) spans D531–D544. Low complexity predominate over residues S549–S560. Positions N581–S597 are enriched in polar residues. A compositionally biased stretch (basic and acidic residues) spans L801–Q810. Positions D844–D855 are enriched in acidic residues. The segment covering V1083–T1097 has biased composition (basic and acidic residues). A compositionally biased stretch (acidic residues) spans V1098–D1107.

The protein belongs to the DNAAF1 family.

The protein resides in the cell projection. Its subcellular location is the cilium. Cilium-specific protein required for cilia structures. The protein is Dynein axonemal assembly factor 1 homolog of Aedes aegypti (Yellowfever mosquito).